The following is a 1758-amino-acid chain: MKVSDRRKFEKANFDEFESALNNKNDLVHCPSITLFESIPTEVRSFYEDEKSGLIKVVKFRTGAMDRKRSFEKVVISVMVGKNVKKFLTFVEDEPDFQGGPIPSKYLIPKKINLMVYTLFQVHTLKFNRKDYDTLSLFYLNRGYYNELSFRVLERCHEIASARPNDSSTMRTFTDFVSGAPIVRSLQKSTIRKYGYNLAPYMFLLLHVDELSIFSAYQASLPGEKKVDTERLKRDLCPRKPIEIKYFSQICNDMMNKKDRLGDILHIILRACALNFGAGPRGGAGDEEDRSITNEEPIIPSVDEHGLKVCKLRSPNTPRRLRKTLDAVKALLVSSCACTARDLDIFDDNNGVAMWKWIKILYHEVAQETTLKDSYRITLVPSSDGISLLAFAGPQRNVYVDDTTRRIQLYTDYNKNGSSEPRLKTLDGLTSDYVFYFVTVLRQMQICALGNSYDAFNHDPWMDVVGFEDPNQVTNRDISRIVLYSYMFLNTAKGCLVEYATFRQYMRELPKNAPQKLNFREMRQGLIALGRHCVGSRFETDLYESATSELMANHSVQTGRNIYGVDSFSLTSVSGTTATLLQERASERWIQWLGLESDYHCSFSSTRNAEDVVAGEAASSNHHQKISRVTRKRPREPKSTNDILVAGQKLFGSSFEFRDLHQLRLCYEIYMADTPSVAVQAPPGYGKTELFHLPLIALASKGDVEYVSFLFVPYTVLLANCMIRLGRRGCLNVAPVRNFIEEGYDGVTDLYVGIYDDLASTNFTDRIAAWENIVECTFRTNNVKLGYLIVDEFHNFETEVYRQSQFGGITNLDFDAFEKAIFLSGTAPEAVADAALQRIGLTGLAKKSMDINELKRSEDLSRGLSSYPTRMFNLIKEKSEVPLGHVHKIRKKVESQPEEALKLLLALFESEPESKAIVVASTTNEVEELACSWRKYFRVVWIHGKLGAAEKVSRTKEFVTDGSMQVLIGTKLVTEGIDIKQLMMVIMLDNRLNIIELIQGVGRLRDGGLCYLLSRKNSWAARNRKGELPPIKEGCITEQVREFYGLESKKGKKGQHVGCCGSRTDLSADTVELIERMDRLAEKQATASMSIVALPSSFQESNSSDRYRKYCSSDEDSNTCIHGSANASTNASTNAITTASTNVRTNATTNASTNATTNASTNASTNATTNASTNATTNSSTNATTTASTNVRTSATTTASINVRTSATTTESTNSSTNATTTESTNSSTNATTTESTNSNTSATTTASINVRTSATTTESTNSSTSATTTASINVRTSATTTKSINSSTNATTTESTNSNTNATTTESTNSSTNATTTESTNSSTNATTTESTNSNTSAATTESTNSNTSATTTESTNASAKEDANKDGNAEDNRFHPVTDINKESYKRKGSQMVLLERKKLKAQFPNTSENMNVLQFLGFRSDEIKHLFLYGIDIYFCPEGVFTQYGLCKGCQKMFELCVCWAGQKVSYRRIAWEALAVERMLRNDEEYKEYLEDIEPYHGDPVGYLKYFSVKRREIYSQIQRNYAWYLAITRRRETISVLDSTRGKQGSQVFRMSGRQIKELYFKVWSNLRESKTEVLQYFLNWDEKKCQEEWEAKDDTVVVEALEKGGVFQRLRSMTSAGLQGPQYVKLQFSRHHRQLRSRYELSLGMHLRDQIALGVTPSKVPHWTAFLSMLIGLFYNKTFRQKLEYLLEQISEVWLLPHWLDLANVEVLAADDTRVPLYMLMVAVHKELDSDDVPDGRFDILLCRDSSREVGE.

The 178-residue stretch at 668 to 845 (EIYMADTPSV…LQRIGLTGLA (178 aa)) folds into the Helicase ATP-binding domain. Residue 681-688 (APPGYGKT) coordinates ATP. The region spanning 900-1051 (ALKLLLALFE…EFYGLESKKG (152 aa)) is the Helicase C-terminal domain. A compositionally biased stretch (low complexity) spans 1142–1360 (NVRTNATTNA…ATTTESTNAS (219 aa)). Positions 1142–1384 (NVRTNATTNA…RFHPVTDINK (243 aa)) are disordered. Over residues 1361–1384 (AKEDANKDGNAEDNRFHPVTDINK) the composition is skewed to basic and acidic residues.

The protein belongs to the helicase family. Yeast subtelomeric Y' repeat subfamily.

Catalyzes DNA unwinding and is involved in telomerase-independent telomere maintenance. This chain is Y' element ATP-dependent helicase YJL225C, found in Saccharomyces cerevisiae (strain ATCC 204508 / S288c) (Baker's yeast).